Reading from the N-terminus, the 460-residue chain is Argininosuccinate lyase (460 aa).

This sequence belongs to the lyase 1 family. Argininosuccinate lyase subfamily.

The protein resides in the cytoplasm. The enzyme catalyses 2-(N(omega)-L-arginino)succinate = fumarate + L-arginine. Its pathway is amino-acid biosynthesis; L-arginine biosynthesis; L-arginine from L-ornithine and carbamoyl phosphate: step 3/3. The chain is Argininosuccinate lyase from Nitratidesulfovibrio vulgaris (strain DSM 19637 / Miyazaki F) (Desulfovibrio vulgaris).